Here is a 62-residue protein sequence, read N- to C-terminus: UPF0434 protein BP2767 (62 aa).

The protein belongs to the UPF0434 family.

The sequence is that of UPF0434 protein BP2767 from Bordetella pertussis (strain Tohama I / ATCC BAA-589 / NCTC 13251).